We begin with the raw amino-acid sequence, 509 residues long: Maturase K (509 aa).

Belongs to the intron maturase 2 family. MatK subfamily.

The protein localises to the plastid. It is found in the chloroplast. Usually encoded in the trnK tRNA gene intron. Probably assists in splicing its own and other chloroplast group II introns. The chain is Maturase K from Nicotiana paniculata.